We begin with the raw amino-acid sequence, 344 residues long: Glyceraldehyde-3-phosphate dehydrogenase (344 aa).

NAD(+) contacts are provided by residues 11–12 (TI) and G110. 139–141 (SCN) contacts D-glyceraldehyde 3-phosphate. C140 (nucleophile) is an active-site residue. R169 serves as a coordination point for NAD(+). 195–196 (HG) is a binding site for D-glyceraldehyde 3-phosphate. Position 302 (Q302) interacts with NAD(+).

It belongs to the glyceraldehyde-3-phosphate dehydrogenase family. In terms of assembly, homotetramer.

The protein resides in the cytoplasm. The catalysed reaction is D-glyceraldehyde 3-phosphate + phosphate + NADP(+) = (2R)-3-phospho-glyceroyl phosphate + NADPH + H(+). It carries out the reaction D-glyceraldehyde 3-phosphate + phosphate + NAD(+) = (2R)-3-phospho-glyceroyl phosphate + NADH + H(+). It participates in carbohydrate degradation; glycolysis; pyruvate from D-glyceraldehyde 3-phosphate: step 1/5. This chain is Glyceraldehyde-3-phosphate dehydrogenase, found in Pyrobaculum calidifontis (strain DSM 21063 / JCM 11548 / VA1).